The following is a 394-amino-acid chain: Na(+)/H(+) antiporter NhaA (394 aa).

11 helical membrane passes run 14-34 (AGGL…NSAL), 59-79 (LLLW…GLEV), 95-115 (VFPA…YLLF), 125-145 (GWAI…ALLG), 154-174 (VFLL…IALF), 179-199 (VSLQ…YMNW), 213-233 (LVLW…GVIV), 254-274 (GLHP…NAGV), 292-312 (IATG…WLAV), 328-348 (IFAV…IASL), and 363-383 (LGIL…LRLV).

This sequence belongs to the NhaA Na(+)/H(+) (TC 2.A.33) antiporter family.

It is found in the cell inner membrane. It catalyses the reaction Na(+)(in) + 2 H(+)(out) = Na(+)(out) + 2 H(+)(in). Na(+)/H(+) antiporter that extrudes sodium in exchange for external protons. This is Na(+)/H(+) antiporter NhaA from Yersinia pseudotuberculosis serotype IB (strain PB1/+).